Consider the following 459-residue polypeptide: MKLWGGRFAKGTDKLVDDFNSSIRFDSRMYRHDILGSIAHANMLGKCGIISADESSLIQSSLKNILNDIEAGKIDFEIDAEDIHMNVEKILISRIGDTGKKLHTGRSRNDQVALDIRMYLRDEIISIKEMVAVLLNTLVKMSESNLDTIMPGYTHLQRAQPITLAHHMMAYFEMFKRDYQRLCDCYSRMNILPLGSGALAGTTYPLDRYMVAQELGFDDVTSNSLDGVSDRDFAIELASCLSILMMHLSRLSEEVILWSSHEFSFVELDDAYSTGSSIMPQKKNPDVAELARGKTGRVYGSLMTLLTVMKSLPLAYNKDMQEDKEAIFDAVDTVKMCLPVFSNMIGTMKVRKENMYKAAQGGFTNATDIADYLVKKGIPFRTAHEIIGKMVLYCIENSKAIDDMTMEEFKSFSDKIQEDVYTEISLEKCVSGRKLVGGPARETEEKAIENAKSFLSSLD.

Belongs to the lyase 1 family. Argininosuccinate lyase subfamily.

It localises to the cytoplasm. It catalyses the reaction 2-(N(omega)-L-arginino)succinate = fumarate + L-arginine. Its pathway is amino-acid biosynthesis; L-arginine biosynthesis; L-arginine from L-ornithine and carbamoyl phosphate: step 3/3. The protein is Argininosuccinate lyase of Ruminiclostridium cellulolyticum (strain ATCC 35319 / DSM 5812 / JCM 6584 / H10) (Clostridium cellulolyticum).